We begin with the raw amino-acid sequence, 453 residues long: uncharacterized protein (453 aa).

This is an uncharacterized protein from Galliformes (FAdV-1).